Reading from the N-terminus, the 340-residue chain is Anthocyanidin reductase (340 aa).

2 residues coordinate NADP(+): Lys-49 and Tyr-169.

The protein belongs to the NAD(P)-dependent epimerase/dehydratase family. Dihydroflavonol-4-reductase subfamily. Homo- or heterodimer. In terms of tissue distribution, flowers and young siliques. Detected specifically in the endothelium of seed coat.

It catalyses the reaction a (2R,3R)-flavan-3-ol + 2 NAD(+) = an anthocyanidin with a 3-hydroxy group + 2 NADH + 2 H(+). The enzyme catalyses a (2R,3R)-flavan-3-ol + 2 NADP(+) = an anthocyanidin with a 3-hydroxy group + 2 NADPH + 2 H(+). It functions in the pathway secondary metabolite biosynthesis; flavonoid biosynthesis. Its activity is regulated as follows. Inhibited by (+)-catechin, quercetin and (+)- and (-)-dihydroquercetin. Not inhibited by salt. Positive cooperativity with NADPH acting as cosubstrate and modulator. Its function is as follows. Involved in the biosynthesis of condensed tannins. Converts cyanidin into (-)-epicatechin as the major product. The chain is Anthocyanidin reductase (BAN) from Arabidopsis thaliana (Mouse-ear cress).